The primary structure comprises 54 residues: uncharacterized protein (54 aa).

A disordered region spans residues Asn-34–Phe-54.

This is an uncharacterized protein from Acidianus two-tailed virus (ATV).